The following is a 409-amino-acid chain: O-glucosyltransferase rumi (409 aa).

A signal peptide spans 1-20 (MLINVVLIILLVGLNGKASG). 4 disulfide bridges follow: Cys-62–Cys-73, Cys-71–Cys-376, Cys-118–Cys-124, and Cys-280–Cys-303. The active-site Proton donor/acceptor is Asp-149. Residues 190–195 (ATKLHP) form an interaction with the consensus sequence C-X-S-X-[PA]-C in peptide substrates region. UDP-alpha-D-glucose-binding positions include 227 to 231 (RGSRT), Arg-235, 274 to 276 (VSF), and 292 to 296 (AASFR). The Prevents secretion from ER signature appears at 406 to 409 (KDEL).

The protein belongs to the glycosyltransferase 90 family.

The protein localises to the endoplasmic reticulum lumen. The protein operates within protein modification; protein glycosylation. In terms of biological role, protein O-glucosyltransferase. Catalyzes the reaction that attaches glucose through an O-glycosidic linkage to a conserved serine residue found in the consensus sequence C-X-S-X-[PA]-C in epidermal growth factor-like repeats. Regulates Notch signaling by glucosylating Notch in the ER, glucosylation is required for the correct folding and cleavage of Notch. This Drosophila pseudoobscura pseudoobscura (Fruit fly) protein is O-glucosyltransferase rumi.